Reading from the N-terminus, the 523-residue chain is MAFPAPSSSSPRRRGRGLAYLLVSVLLLASRVPGAAGADSEFEDGVSPKFPGCDNPFQKVKVTYWVDGDERSSLTGITARFGEVLPATGSDGDKRKAVVPAPKTGCAKSSAPLASSIAVAERGECTFLEKAKTAESGGAAALLLINDEDDLQKMVCTQNDTVPNIGIPVVMVSQSAGRKILSGMDGGAKVDILMYAPEKPSFDGAIPFLWLMAVGSVACASVWSFVVVGDEDKNAPTLGGEEAADSEIVELQTKTALVFIVTASLVLLFLFFFKSTWSAWLLVVLFCLSGLQGLHYVASTLIVRTCDRCREAKVALPVLGNVTVVTLVILPLALIFVVVWAVHQNSPFAWVGQDLMGICMMILVLQVVHLPNIKVATALLVSAFMYDIFWVFISPFIFKKSVMITVARGSDEGPSLPMVLKMPKEFDTWNGYDMIGFGDILFPGLLVAFSFRYDRANGKDLTDGYFLCLMIGYAFGLSCTYVGLYLMKSGQPALLYLVPSTLGTIVTLGAKRGELSQLWNAKV.

The first 35 residues, 1–35 (MAFPAPSSSSPRRRGRGLAYLLVSVLLLASRVPGA), serve as a signal peptide directing secretion. The Lumenal portion of the chain corresponds to 36–207 (AGADSEFEDG…EKPSFDGAIP (172 aa)). Residues 110–182 (SAPLASSIAV…SQSAGRKILS (73 aa)) form the PA domain. Asn159 is a glycosylation site (N-linked (GlcNAc...) asparagine). The chain crosses the membrane as a helical span at residues 208–228 (FLWLMAVGSVACASVWSFVVV). Topologically, residues 229–254 (GDEDKNAPTLGGEEAADSEIVELQTK) are cytoplasmic. A helical membrane pass occupies residues 255–272 (TALVFIVTASLVLLFLFF). Residues 273–275 (FKS) lie on the Lumenal side of the membrane. The helical transmembrane segment at 276-298 (TWSAWLLVVLFCLSGLQGLHYVA) threads the bilayer. Topologically, residues 299–321 (STLIVRTCDRCREAKVALPVLGN) are cytoplasmic. Residues 322–342 (VTVVTLVILPLALIFVVVWAV) form a helical membrane-spanning segment. Residues 343 to 347 (HQNSP) lie on the Lumenal side of the membrane. Residues 348–368 (FAWVGQDLMGICMMILVLQVV) traverse the membrane as a helical segment. Residues 369 to 377 (HLPNIKVAT) are Cytoplasmic-facing. Residues 378-398 (ALLVSAFMYDIFWVFISPFIF) traverse the membrane as a helical segment. Residue Asp387 is part of the active site. At 399 to 430 (KKSVMITVARGSDEGPSLPMVLKMPKEFDTWN) the chain is on the lumenal side. A helical membrane pass occupies residues 431-451 (GYDMIGFGDILFPGLLVAFSF). The active site involves Asp439. Residues 452 to 465 (RYDRANGKDLTDGY) are Cytoplasmic-facing. A helical transmembrane segment spans residues 466–486 (FLCLMIGYAFGLSCTYVGLYL). Over 487-489 (MKS) the chain is Lumenal. Residues 490–510 (GQPALLYLVPSTLGTIVTLGA) form a helical membrane-spanning segment. The short motif at 492 to 494 (PAL) is the PAL element. Residues 511–523 (KRGELSQLWNAKV) lie on the Cytoplasmic side of the membrane.

It belongs to the peptidase A22B family. Glycosylated.

The protein resides in the endosome membrane. Its function is as follows. Intramembrane-cleaving aspartic protease (I-CLiP) that cleaves type II membrane signal peptides in the hydrophobic plane of the membrane. The chain is Signal peptide peptidase-like 3 (SPPL3) from Oryza sativa subsp. japonica (Rice).